The primary structure comprises 152 residues: Cytochrome c-type biogenesis CcmH-like mitochondrial protein (152 aa).

Topologically, residues Met-1–Gln-83 are mitochondrial intermembrane. Heme is bound by residues Cys-26 and Cys-29. Residues Thr-84–Tyr-104 traverse the membrane as a helical segment. At Lys-105–Lys-152 the chain is on the mitochondrial matrix side.

It belongs to the CcmH/CycL/Ccl2/NrfF family.

Its subcellular location is the mitochondrion inner membrane. Its function is as follows. Plays a role in mitochondrial cytochrome c maturation. Probable component of a heme lyase complex involved in the reduction of apocytochrome c. This chain is Cytochrome c-type biogenesis CcmH-like mitochondrial protein, found in Oryza sativa subsp. indica (Rice).